Consider the following 101-residue polypeptide: DNA-binding protein Fis (101 aa).

Residues 77-96 constitute a DNA-binding region (H-T-H motif); sequence QTRAANMLGINRGTLRKKLK.

Belongs to the transcriptional regulatory Fis family. As to quaternary structure, homodimer.

Activates ribosomal RNA transcription. Plays a direct role in upstream activation of rRNA promoters. This chain is DNA-binding protein Fis, found in Shewanella loihica (strain ATCC BAA-1088 / PV-4).